The sequence spans 129 residues: Small ribosomal subunit protein uS9 (129 aa).

It belongs to the universal ribosomal protein uS9 family.

The protein is Small ribosomal subunit protein uS9 of Aliarcobacter butzleri (strain RM4018) (Arcobacter butzleri).